Here is a 181-residue protein sequence, read N- to C-terminus: Oligoribonuclease (181 aa).

Positions 8–171 (LIWIDLEMTG…QDIQESIAEL (164 aa)) constitute an Exonuclease domain. Tyr-129 is a catalytic residue.

The protein belongs to the oligoribonuclease family.

It localises to the cytoplasm. Functionally, 3'-to-5' exoribonuclease specific for small oligoribonucleotides. This Shewanella baltica (strain OS155 / ATCC BAA-1091) protein is Oligoribonuclease.